Reading from the N-terminus, the 309-residue chain is Porphobilinogen deaminase (309 aa).

S-(dipyrrolylmethanemethyl)cysteine is present on Cys241.

The protein belongs to the HMBS family. In terms of assembly, monomer. Dipyrromethane is required as a cofactor.

The catalysed reaction is 4 porphobilinogen + H2O = hydroxymethylbilane + 4 NH4(+). It functions in the pathway porphyrin-containing compound metabolism; protoporphyrin-IX biosynthesis; coproporphyrinogen-III from 5-aminolevulinate: step 2/4. Its function is as follows. Tetrapolymerization of the monopyrrole PBG into the hydroxymethylbilane pre-uroporphyrinogen in several discrete steps. The polypeptide is Porphobilinogen deaminase (Bacillus cereus (strain AH187)).